The following is a 177-amino-acid chain: N5-carboxyaminoimidazole ribonucleotide mutase (177 aa).

Residues Ser18, Asp21, and Arg48 each coordinate substrate.

This sequence belongs to the AIR carboxylase family. Class I subfamily.

The catalysed reaction is 5-carboxyamino-1-(5-phospho-D-ribosyl)imidazole + H(+) = 5-amino-1-(5-phospho-D-ribosyl)imidazole-4-carboxylate. It participates in purine metabolism; IMP biosynthesis via de novo pathway; 5-amino-1-(5-phospho-D-ribosyl)imidazole-4-carboxylate from 5-amino-1-(5-phospho-D-ribosyl)imidazole (N5-CAIR route): step 2/2. Catalyzes the conversion of N5-carboxyaminoimidazole ribonucleotide (N5-CAIR) to 4-carboxy-5-aminoimidazole ribonucleotide (CAIR). The polypeptide is N5-carboxyaminoimidazole ribonucleotide mutase (Pyrococcus horikoshii (strain ATCC 700860 / DSM 12428 / JCM 9974 / NBRC 100139 / OT-3)).